The following is a 343-amino-acid chain: Glycerol-3-phosphate dehydrogenase [NAD(P)+] (343 aa).

NADPH-binding residues include Ser11, Trp12, Arg32, and Lys106. Lys106, Gly137, and Ser139 together coordinate sn-glycerol 3-phosphate. Position 141 (Ala141) interacts with NADPH. Residues Lys192, Asp245, Ser255, Arg256, and Asn257 each coordinate sn-glycerol 3-phosphate. Residue Lys192 is the Proton acceptor of the active site. Residue Arg256 participates in NADPH binding. NADPH contacts are provided by Val280 and Glu282.

The protein belongs to the NAD-dependent glycerol-3-phosphate dehydrogenase family.

The protein localises to the cytoplasm. The catalysed reaction is sn-glycerol 3-phosphate + NAD(+) = dihydroxyacetone phosphate + NADH + H(+). It catalyses the reaction sn-glycerol 3-phosphate + NADP(+) = dihydroxyacetone phosphate + NADPH + H(+). It participates in membrane lipid metabolism; glycerophospholipid metabolism. Catalyzes the reduction of the glycolytic intermediate dihydroxyacetone phosphate (DHAP) to sn-glycerol 3-phosphate (G3P), the key precursor for phospholipid synthesis. The polypeptide is Glycerol-3-phosphate dehydrogenase [NAD(P)+] (Syntrophomonas wolfei subsp. wolfei (strain DSM 2245B / Goettingen)).